A 314-amino-acid polypeptide reads, in one-letter code: ATP synthase gamma chain (314 aa).

It belongs to the ATPase gamma chain family. As to quaternary structure, F-type ATPases have 2 components, CF(1) - the catalytic core - and CF(0) - the membrane proton channel. CF(1) has five subunits: alpha(3), beta(3), gamma(1), delta(1), epsilon(1). CF(0) has three main subunits: a, b and c.

Its subcellular location is the cell inner membrane. Functionally, produces ATP from ADP in the presence of a proton gradient across the membrane. The gamma chain is believed to be important in regulating ATPase activity and the flow of protons through the CF(0) complex. The sequence is that of ATP synthase gamma chain from Gloeobacter violaceus (strain ATCC 29082 / PCC 7421).